Here is a 407-residue protein sequence, read N- to C-terminus: Monooxygenase 2 (407 aa).

The protein belongs to the 3-hydroxybenzoate 6-hydroxylase family. As to quaternary structure, monomer. FAD serves as cofactor. As to expression, expressed in seeds, seedlings, roots, leaves, flowers, pollen and siliques.

This is Monooxygenase 2 from Arabidopsis thaliana (Mouse-ear cress).